The following is a 154-amino-acid chain: Myoglobin (154 aa).

Residues 2 to 148 (GLSEAEWQLV…FRKDIAAKYK (147 aa)) enclose the Globin domain. Residue serine 4 is modified to Phosphoserine. Nitrite is bound at residue histidine 65. An O2-binding site is contributed by histidine 65. Threonine 68 carries the phosphothreonine modification. Histidine 94 provides a ligand contact to heme b.

It belongs to the globin family. As to quaternary structure, monomeric.

It localises to the cytoplasm. Its subcellular location is the sarcoplasm. It catalyses the reaction Fe(III)-heme b-[protein] + nitric oxide + H2O = Fe(II)-heme b-[protein] + nitrite + 2 H(+). The enzyme catalyses H2O2 + AH2 = A + 2 H2O. Its function is as follows. Monomeric heme protein which primary function is to store oxygen and facilitate its diffusion within muscle tissues. Reversibly binds oxygen through a pentacoordinated heme iron and enables its timely and efficient release as needed during periods of heightened demand. Depending on the oxidative conditions of tissues and cells, and in addition to its ability to bind oxygen, it also has a nitrite reductase activity whereby it regulates the production of bioactive nitric oxide. Under stress conditions, like hypoxia and anoxia, it also protects cells against reactive oxygen species thanks to its pseudoperoxidase activity. In Indopacetus pacificus (Longman's beaked whale), this protein is Myoglobin (MB).